The chain runs to 333 residues: Ornithine carbamoyltransferase (333 aa).

Carbamoyl phosphate contacts are provided by residues 57–60 (STRT), Gln-83, Arg-107, and 134–137 (HPTQ). L-ornithine-binding positions include Asn-168, Asp-232, and 236 to 237 (SM). Carbamoyl phosphate is bound by residues 274 to 275 (CL) and Arg-319.

The protein belongs to the aspartate/ornithine carbamoyltransferase superfamily. OTCase family.

The protein localises to the cytoplasm. It carries out the reaction carbamoyl phosphate + L-ornithine = L-citrulline + phosphate + H(+). Its pathway is amino-acid biosynthesis; L-arginine biosynthesis; L-arginine from L-ornithine and carbamoyl phosphate: step 1/3. Reversibly catalyzes the transfer of the carbamoyl group from carbamoyl phosphate (CP) to the N(epsilon) atom of ornithine (ORN) to produce L-citrulline. The sequence is that of Ornithine carbamoyltransferase from Photobacterium profundum (strain SS9).